The chain runs to 424 residues: Glutathione reductase (424 aa).

Position 8 (lysine 8) interacts with FAD. Glutathione is bound at residue tyrosine 56. Alanine 72 contacts FAD. NADP(+)-binding residues include alanine 137, isoleucine 140, glutamate 143, arginine 160, arginine 166, and glycine 236. Aspartate 277 serves as a coordination point for FAD. Leucine 283 serves as a coordination point for NADP(+). Threonine 285 lines the FAD pocket. Arginine 293 contributes to the glutathione binding site. Valine 316 serves as a coordination point for NADP(+). Residue histidine 413 coordinates FAD. Residue histidine 413 is the Proton acceptor of the active site.

This sequence belongs to the class-I pyridine nucleotide-disulfide oxidoreductase family. In terms of assembly, homodimer; disulfide-linked. FAD is required as a cofactor.

The protein resides in the mitochondrion. The protein localises to the cytoplasm. The enzyme catalyses 2 glutathione + NADP(+) = glutathione disulfide + NADPH + H(+). Its function is as follows. Catalyzes the reduction of glutathione disulfide (GSSG) to reduced glutathione (GSH). Constitutes the major mechanism to maintain a high GSH:GSSG ratio in the cytosol. This is Glutathione reductase (Gsr) from Rattus norvegicus (Rat).